Here is a 232-residue protein sequence, read N- to C-terminus: Large ribosomal subunit protein uL1 (232 aa).

Belongs to the universal ribosomal protein uL1 family. In terms of assembly, part of the 50S ribosomal subunit.

In terms of biological role, binds directly to 23S rRNA. The L1 stalk is quite mobile in the ribosome, and is involved in E site tRNA release. Protein L1 is also a translational repressor protein, it controls the translation of the L11 operon by binding to its mRNA. The polypeptide is Large ribosomal subunit protein uL1 (Methylobacterium radiotolerans (strain ATCC 27329 / DSM 1819 / JCM 2831 / NBRC 15690 / NCIMB 10815 / 0-1)).